The primary structure comprises 375 residues: tRNA-specific 2-thiouridylase MnmA (375 aa).

Residues 16–23 (GMSGGVDS) and Met42 each bind ATP. The segment at 102-104 (NPD) is interaction with target base in tRNA. Residue Cys107 is the Nucleophile of the active site. Cys107 and Cys203 are joined by a disulfide. Gly131 contacts ATP. An interaction with tRNA region spans residues 153-155 (KDQ). Cys203 acts as the Cysteine persulfide intermediate in catalysis. An interaction with tRNA region spans residues 315–316 (RY).

Belongs to the MnmA/TRMU family.

Its subcellular location is the cytoplasm. The enzyme catalyses S-sulfanyl-L-cysteinyl-[protein] + uridine(34) in tRNA + AH2 + ATP = 2-thiouridine(34) in tRNA + L-cysteinyl-[protein] + A + AMP + diphosphate + H(+). Its function is as follows. Catalyzes the 2-thiolation of uridine at the wobble position (U34) of tRNA, leading to the formation of s(2)U34. This is tRNA-specific 2-thiouridylase MnmA from Pseudomonas aeruginosa (strain UCBPP-PA14).